The primary structure comprises 37 residues: Large ribosomal subunit protein bL36 (37 aa).

It belongs to the bacterial ribosomal protein bL36 family.

The chain is Large ribosomal subunit protein bL36 from Brevibacillus brevis (strain 47 / JCM 6285 / NBRC 100599).